The chain runs to 642 residues: Threonine--tRNA ligase (642 aa).

Positions 1–61 constitute a TGS domain; sequence MPVITLPDGS…ENDATLAIIT (61 aa). A catalytic region spans residues 243–534; it reads DHRKIGKQLD…LTEEFAGFFP (292 aa). Zn(2+) contacts are provided by Cys334, His385, and His511.

The protein belongs to the class-II aminoacyl-tRNA synthetase family. In terms of assembly, homodimer. The cofactor is Zn(2+).

Its subcellular location is the cytoplasm. It carries out the reaction tRNA(Thr) + L-threonine + ATP = L-threonyl-tRNA(Thr) + AMP + diphosphate + H(+). Functionally, catalyzes the attachment of threonine to tRNA(Thr) in a two-step reaction: L-threonine is first activated by ATP to form Thr-AMP and then transferred to the acceptor end of tRNA(Thr). Also edits incorrectly charged L-seryl-tRNA(Thr). This Salmonella gallinarum (strain 287/91 / NCTC 13346) protein is Threonine--tRNA ligase.